A 402-amino-acid chain; its full sequence is UDP-glucose 6-dehydrogenase (402 aa).

Residues K2–L19, V11, D29, K34, T83, T118, and E145 contribute to the NAD(+) site. Substrate-binding positions include E141–E145, K204, N208, Y249–S253, and G257. Y259 is an NAD(+) binding site. C260 (nucleophile) is an active-site residue. Residue K263 coordinates NAD(+). K320 contacts substrate. An NAD(+)-binding site is contributed by R327.

This sequence belongs to the UDP-glucose/GDP-mannose dehydrogenase family.

It carries out the reaction UDP-alpha-D-glucose + 2 NAD(+) + H2O = UDP-alpha-D-glucuronate + 2 NADH + 3 H(+). Its pathway is nucleotide-sugar biosynthesis; UDP-alpha-D-glucuronate biosynthesis; UDP-alpha-D-glucuronate from UDP-alpha-D-glucose: step 1/1. Catalyzes the formation of UDP-glucuronic acid which is required for capsular hyaluronic acid synthesis. This is UDP-glucose 6-dehydrogenase (hasB) from Streptococcus pyogenes serotype M18 (strain MGAS8232).